Reading from the N-terminus, the 176-residue chain is Lactoylglutathione lyase (176 aa).

In terms of domain architecture, VOC spans 23 to 167 (VFNHTMLRVK…DGYWVEIVQA (145 aa)). His-26 lines the Ni(2+) pocket. A substrate-binding site is contributed by Arg-30. A Ni(2+)-binding site is contributed by Glu-92. Substrate contacts are provided by Asn-96, Arg-114, and His-118. His-118 and Glu-163 together coordinate Ni(2+). The active-site Proton donor/acceptor is the Glu-163.

It belongs to the glyoxalase I family. In terms of assembly, monomer. It depends on Ni(2+) as a cofactor. The cofactor is Zn(2+).

It carries out the reaction (R)-S-lactoylglutathione = methylglyoxal + glutathione. Its pathway is secondary metabolite metabolism; methylglyoxal degradation; (R)-lactate from methylglyoxal: step 1/2. Catalyzes the conversion of hemimercaptal, formed from methylglyoxal and glutathione, to S-lactoylglutathione. The chain is Lactoylglutathione lyase (gloA) from Pseudomonas aeruginosa (strain ATCC 15692 / DSM 22644 / CIP 104116 / JCM 14847 / LMG 12228 / 1C / PRS 101 / PAO1).